A 129-amino-acid chain; its full sequence is Mini-ribonuclease 3-like protein (129 aa).

Residue Asp-23 is part of the active site.

The protein belongs to the MrnC RNase family.

In terms of biological role, might be a ribonuclease involved in RNA processing. In Fusobacterium nucleatum subsp. nucleatum (strain ATCC 25586 / DSM 15643 / BCRC 10681 / CIP 101130 / JCM 8532 / KCTC 2640 / LMG 13131 / VPI 4355), this protein is Mini-ribonuclease 3-like protein (mrnCL).